The primary structure comprises 126 residues: Holo-[acyl-carrier-protein] synthase (126 aa).

Mg(2+) contacts are provided by aspartate 9 and glutamate 57.

Belongs to the P-Pant transferase superfamily. AcpS family. Requires Mg(2+) as cofactor.

Its subcellular location is the cytoplasm. It carries out the reaction apo-[ACP] + CoA = holo-[ACP] + adenosine 3',5'-bisphosphate + H(+). In terms of biological role, transfers the 4'-phosphopantetheine moiety from coenzyme A to a Ser of acyl-carrier-protein. This chain is Holo-[acyl-carrier-protein] synthase, found in Pseudoalteromonas atlantica (strain T6c / ATCC BAA-1087).